We begin with the raw amino-acid sequence, 335 residues long: Tetraacyldisaccharide 4'-kinase (335 aa).

Residue 58 to 65 coordinates ATP; it reads TVGGSGKT.

Belongs to the LpxK family.

It catalyses the reaction a lipid A disaccharide + ATP = a lipid IVA + ADP + H(+). It participates in glycolipid biosynthesis; lipid IV(A) biosynthesis; lipid IV(A) from (3R)-3-hydroxytetradecanoyl-[acyl-carrier-protein] and UDP-N-acetyl-alpha-D-glucosamine: step 6/6. Functionally, transfers the gamma-phosphate of ATP to the 4'-position of a tetraacyldisaccharide 1-phosphate intermediate (termed DS-1-P) to form tetraacyldisaccharide 1,4'-bis-phosphate (lipid IVA). In Shewanella oneidensis (strain ATCC 700550 / JCM 31522 / CIP 106686 / LMG 19005 / NCIMB 14063 / MR-1), this protein is Tetraacyldisaccharide 4'-kinase.